Reading from the N-terminus, the 277-residue chain is Large ribosomal subunit protein uL2m (277 aa).

The segment at alanine 225–arginine 263 is disordered. A compositionally biased stretch (polar residues) spans threonine 248–threonine 259.

The protein belongs to the universal ribosomal protein uL2 family.

The protein resides in the mitochondrion. The polypeptide is Large ribosomal subunit protein uL2m (RPL2) (Reclinomonas americana).